Consider the following 793-residue polypeptide: 3',5'-cyclic-nucleotide phosphodiesterase regA (793 aa).

Positions 1-153 (MNNKQEEIDQ…SSHRVSDFSD (153 aa)) are disordered. Low complexity-rich tracts occupy residues 13 to 34 (SSTS…DSTS), 54 to 69 (NKNN…SNNN), and 80 to 121 (NNSS…NNNN). In terms of domain architecture, Response regulatory spans 161 to 280 (RILVADDDDV…LLKKKIDTVL (120 aa)). A 4-aspartylphosphate modification is found at D212. Positions 410-733 (RRNSIPTFPQ…ENWQAYMELQ (324 aa)) constitute a PDEase domain. The active-site Proton donor is H487. Residues H491, H527, D528, and D639 each contribute to the a divalent metal cation site. The interval 756 to 793 (KLPKIDEEENRDKVSSSSSSSTAPLTSTSSSNNETSSS) is disordered. Residues 770–793 (SSSSSSSTAPLTSTSSSNNETSSS) are compositionally biased toward low complexity.

It belongs to the cyclic nucleotide phosphodiesterase family. A divalent metal cation serves as cofactor. In terms of processing, the phosphorelay mechanism involves the sequential transfer of a phosphate group from Asp-212 of pde2 to 'His-65' of rdeA. Phosphorylation of Asp-212 activates the phosphodiesterase domain.

Its subcellular location is the cytoplasm. The protein localises to the cytosol. The catalysed reaction is 3',5'-cyclic AMP + H2O = AMP + H(+). With respect to regulation, inhibited by 3-isobutyl-1-methylxanthine (IBMX). Its function is as follows. Phosphodiesterase specific for cAMP. Involved in the degradation of intracellular cAMP. Morphological suppressor of tagB. Phosphorelay protein that accepts phosphate from rdeA or supplies phosphate from regA; depending on the relative concentration of the phosphodonor proteins. This chain is 3',5'-cyclic-nucleotide phosphodiesterase regA (regA), found in Dictyostelium discoideum (Social amoeba).